The sequence spans 271 residues: Phosphatidylglycerol--prolipoprotein diacylglyceryl transferase (271 aa).

Transmembrane regions (helical) follow at residues 10–30 (VALA…LVGI), 56–76 (LVFW…VLFY), 92–112 (WKGG…ALWF), 120–140 (FFQL…AGRI), 174–194 (PSQL…LWLF), 202–222 (MAVS…VEFV), and 237–257 (LTMG…LIWL). Arg139 is an a 1,2-diacyl-sn-glycero-3-phospho-(1'-sn-glycerol) binding site.

Belongs to the Lgt family.

The protein resides in the cell inner membrane. The enzyme catalyses L-cysteinyl-[prolipoprotein] + a 1,2-diacyl-sn-glycero-3-phospho-(1'-sn-glycerol) = an S-1,2-diacyl-sn-glyceryl-L-cysteinyl-[prolipoprotein] + sn-glycerol 1-phosphate + H(+). Its pathway is protein modification; lipoprotein biosynthesis (diacylglyceryl transfer). Catalyzes the transfer of the diacylglyceryl group from phosphatidylglycerol to the sulfhydryl group of the N-terminal cysteine of a prolipoprotein, the first step in the formation of mature lipoproteins. This is Phosphatidylglycerol--prolipoprotein diacylglyceryl transferase from Pseudomonas fluorescens (strain Pf0-1).